The sequence spans 136 residues: Large ribosomal subunit protein uL16 (136 aa).

This sequence belongs to the universal ribosomal protein uL16 family. Part of the 50S ribosomal subunit.

In terms of biological role, binds 23S rRNA and is also seen to make contacts with the A and possibly P site tRNAs. This chain is Large ribosomal subunit protein uL16, found in Hamiltonella defensa subsp. Acyrthosiphon pisum (strain 5AT).